Reading from the N-terminus, the 495-residue chain is ATP synthase subunit alpha, chloroplastic (495 aa).

170-177 serves as a coordination point for ATP; the sequence is GDRQTGKT.

It belongs to the ATPase alpha/beta chains family. As to quaternary structure, F-type ATPases have 2 components, CF(1) - the catalytic core - and CF(0) - the membrane proton channel. CF(1) has five subunits: alpha(3), beta(3), gamma(1), delta(1), epsilon(1). CF(0) has four main subunits: a, b, b' and c.

The protein localises to the plastid. It localises to the chloroplast thylakoid membrane. The catalysed reaction is ATP + H2O + 4 H(+)(in) = ADP + phosphate + 5 H(+)(out). Produces ATP from ADP in the presence of a proton gradient across the membrane. The alpha chain is a regulatory subunit. The protein is ATP synthase subunit alpha, chloroplastic of Cyanidioschyzon merolae (strain NIES-3377 / 10D) (Unicellular red alga).